We begin with the raw amino-acid sequence, 551 residues long: Cysteine desulfurase SufS (551 aa).

The N-terminal stretch at 1 to 22 (MRPSSAAWICLLLRIANYTCYS) is a signal peptide. Position 327 is an N6-(pyridoxal phosphate)lysine (lysine 327). Catalysis depends on cysteine 500, which acts as the Cysteine persulfide intermediate.

The protein belongs to the class-V pyridoxal-phosphate-dependent aminotransferase family. Csd subfamily. Monomer. Interacts with SufE; interaction enhances cysteine desulfurase activity of SufS. Pyridoxal 5'-phosphate serves as cofactor.

It is found in the plastid. The protein localises to the apicoplast. It catalyses the reaction (sulfur carrier)-H + L-cysteine = (sulfur carrier)-SH + L-alanine. Its pathway is cofactor biosynthesis; iron-sulfur cluster biosynthesis. Functionally, catalyzes sulfur activation and mobilization in sulfur mobilization (SUF) pathway for iron-sulfur (Fe-S) cluster biogenesis. Active when in complex with a partner protein SufE. Required for apicoplast maintenance. Plays a role in the development of sporozoites in oocysts in mosquitoes. The sequence is that of Cysteine desulfurase SufS from Plasmodium vivax.